A 593-amino-acid polypeptide reads, in one-letter code: Kelch-like protein 2 (593 aa).

The segment at 1–28 (METPPLPPACTKQGHQKPLDSKDDNTEK) is disordered. A compositionally biased stretch (basic and acidic residues) spans 17–28 (KPLDSKDDNTEK). One can recognise a BTB domain in the interval 56 to 123 (CDVTIVAEDM…VYTAEIQVTE (68 aa)). 6 Kelch repeats span residues 308–353 (LMVV…YMAG), 354–400 (LVFA…VLNG), 402–447 (LYAV…VVGG), 449–496 (LYAV…VLNN), 497–543 (LLYA…AVNG), and 545–591 (LYVV…VIDK).

In terms of assembly, component of the BCR(KLHL2) E3 ubiquitin ligase complex, at least composed of CUL3 and KLHL2 and RBX1. Binds actin. Interacts with KLHL12. Interacts (via N-terminus) with FYN (via SH3 domain). Ubiquitous. Detected throughout the brain.

It localises to the cytoplasm. Its subcellular location is the cytoskeleton. The protein localises to the cell projection. The protein resides in the ruffle. It is found in the lamellipodium. It localises to the cytosol. Its pathway is protein modification; protein ubiquitination. In terms of biological role, substrate-specific adapter of a BCR (BTB-CUL3-RBX1) E3 ubiquitin ligase complex that mediates the ubiquitination of target proteins, such as NPTXR, WNK1, WNK3 and WNK4, leading most often to their proteasomal degradation. The BCR(KLHL2) complex catalyzes ubiquitination and degradation of NPTXR. Responsible for degradative ubiquitination of the WNK kinases WNK1, WNK3 and WNK4. Plays a role in the reorganization of the actin cytoskeleton. Promotes growth of cell projections in oligodendrocyte precursors. In Homo sapiens (Human), this protein is Kelch-like protein 2.